The sequence spans 231 residues: 7-cyano-7-deazaguanine synthase (231 aa).

ATP is bound at residue 8–18; the sequence is FSGGQDSTTCL. Zn(2+)-binding residues include Cys188, Cys197, Cys200, and Cys203.

The protein belongs to the QueC family. Requires Zn(2+) as cofactor.

It carries out the reaction 7-carboxy-7-deazaguanine + NH4(+) + ATP = 7-cyano-7-deazaguanine + ADP + phosphate + H2O + H(+). The protein operates within purine metabolism; 7-cyano-7-deazaguanine biosynthesis. Its function is as follows. Catalyzes the ATP-dependent conversion of 7-carboxy-7-deazaguanine (CDG) to 7-cyano-7-deazaguanine (preQ(0)). This is 7-cyano-7-deazaguanine synthase from Escherichia coli (strain SMS-3-5 / SECEC).